The sequence spans 297 residues: Nucleotide-binding protein Bphy_0322 (297 aa).

8–15 (GISGSGKS) provides a ligand contact to ATP. Residue 57 to 60 (DARS) coordinates GTP.

Belongs to the RapZ-like family.

In terms of biological role, displays ATPase and GTPase activities. This chain is Nucleotide-binding protein Bphy_0322, found in Paraburkholderia phymatum (strain DSM 17167 / CIP 108236 / LMG 21445 / STM815) (Burkholderia phymatum).